Here is a 406-residue protein sequence, read N- to C-terminus: Proteasome-activating nucleotidase 1 (406 aa).

Positions 13–72 (YDKDSASQQEKITALQERLEVLETQNEEMRDKLLDTNAENNKYQQKLERLTHENKKLKQS) form a coiled coil. ATP is bound by residues 194–199 (GTGKTM) and histidine 333. Residues 404 to 406 (AFA) form a docks into pockets in the proteasome alpha-ring to cause gate opening region.

The protein belongs to the AAA ATPase family. As to quaternary structure, homododecamer, in a proposed two stacked hexameric ring configuration, but may also form homohexamer. The hexameric complex has likely a two-ring architecture resembling a top hat that caps the 20S proteasome core at one or both ends. Upon ATP-binding, the C-terminus of PAN probably interacts with the alpha-rings of the proteasome core by binding to the intersubunit pockets. Interacts with SAMP1-MoaE conjugate in vitro, but does not bind to SAMP1 or MoaE alone. Interacts with NcsA.

Its subcellular location is the cytoplasm. ATPase activity is inhibited by EDTA in vitro. In terms of biological role, ATPase which is responsible for recognizing, binding, unfolding and translocation of substrate proteins into the archaeal 20S proteasome core particle. Is essential for opening the gate of the 20S proteasome via an interaction with its C-terminus, thereby allowing substrate entry and access to the site of proteolysis. Thus, the C-terminus of the proteasomal ATPase functions like a 'key in a lock' to induce gate opening and therefore regulate proteolysis. Unfolding activity requires energy from ATP hydrolysis, whereas ATP binding alone promotes ATPase-20S proteasome association which triggers gate opening, and supports translocation of unfolded substrates. Is also able to cleave other nucleoside triphosphates including GTP and TTP, but the rate of hydrolysis is 4- to 5-fold slower than for ATP. The chain is Proteasome-activating nucleotidase 1 from Haloferax volcanii (strain ATCC 29605 / DSM 3757 / JCM 8879 / NBRC 14742 / NCIMB 2012 / VKM B-1768 / DS2) (Halobacterium volcanii).